Here is a 145-residue protein sequence, read N- to C-terminus: Basic phospholipase A2 KPA2 (145 aa).

Residues 1–19 (MYPAHLLVLVAVCVSLLGA) form the signal peptide. Residues 20–27 (ANIPPQPL) constitute a propeptide that is removed on maturation. Intrachain disulfides connect Cys38–Cys97, Cys52–Cys144, Cys54–Cys70, Cys69–Cys125, Cys76–Cys118, Cys86–Cys111, and Cys104–Cys116. Residues Tyr53, Gly55, and Gly57 each contribute to the Ca(2+) site. The active site involves His73. Asp74 lines the Ca(2+) pocket. Asp119 is an active-site residue.

This sequence belongs to the phospholipase A2 family. Group I subfamily. D49 sub-subfamily. Monomer. Ca(2+) serves as cofactor. In terms of tissue distribution, expressed by the venom gland.

It is found in the secreted. It catalyses the reaction a 1,2-diacyl-sn-glycero-3-phosphocholine + H2O = a 1-acyl-sn-glycero-3-phosphocholine + a fatty acid + H(+). Functionally, snake venom phospholipase A2 (PLA2) that shows anticoagulant and neurotoxic activities. PLA2 catalyzes the calcium-dependent hydrolysis of the 2-acyl groups in 3-sn-phosphoglycerides. The protein is Basic phospholipase A2 KPA2 of Bungarus caeruleus (Indian krait).